An 883-amino-acid polypeptide reads, in one-letter code: Serine/threonine-protein kinase greatwall (883 aa).

Methionine 1 bears the N-acetylmethionine mark. The segment at 1–23 (MEPTMGGEMESGGGAATGECVNR) is disordered. The Protein kinase domain maps to 35-839 (FTIVKPISRG…MKELKHHPLF (805 aa)). Residues 41–49 (ISRGAFGKV) and lysine 62 each bind ATP. The active-site Proton acceptor is the aspartate 156. Residues threonine 209 and threonine 224 each carry the phosphothreonine modification. Serine 295 is modified (phosphoserine). Positions 298–317 (RLATSSTSSPSHTFISSMES) are disordered. The segment covering 301-314 (TSSTSSPSHTFISS) has biased composition (low complexity). Phosphoserine is present on residues serine 373 and serine 456. The interval 511–530 (ENVGSSFTDKHQTPEKSPVP) is disordered. The residue at position 523 (threonine 523) is a Phosphothreonine. A phosphoserine mark is found at serine 556 and serine 560. Positions 569-597 (IHMDSDSSFPGISIMESPLGGQSLDPDKN) are disordered. Phosphoserine occurs at positions 635, 661, and 672. The tract at residues 706 to 737 (RSDMPYQQTPNQVKSETPYRTPKSVRRGAAPV) is disordered. Over residues 710-720 (PYQQTPNQVKS) the composition is skewed to polar residues. A Phosphothreonine modification is found at threonine 726. Serine 729 is modified (phosphoserine). Threonine 745 carries the phosphothreonine; by CDK1 modification. One can recognise an AGC-kinase C-terminal domain in the interval 840-883 (SGVDWENLQHQKMPFIPQPDDETDTSYFEARNNAQHLTVSGFSL). A phosphoserine mark is found at serine 879 and serine 882.

This sequence belongs to the protein kinase superfamily. AGC Ser/Thr protein kinase family. Post-translationally, phosphorylation at Thr-745 by CDK1 during M phase activates its kinase activity. Maximum phosphorylation occurs in prometaphase.

It is found in the cytoplasm. The protein resides in the cytoskeleton. The protein localises to the microtubule organizing center. Its subcellular location is the centrosome. It localises to the nucleus. It catalyses the reaction L-seryl-[protein] + ATP = O-phospho-L-seryl-[protein] + ADP + H(+). It carries out the reaction L-threonyl-[protein] + ATP = O-phospho-L-threonyl-[protein] + ADP + H(+). Its function is as follows. Serine/threonine kinase that plays a key role in M phase by acting as a regulator of mitosis entry and maintenance. Acts by promoting the inactivation of protein phosphatase 2A (PP2A) during M phase: does not directly inhibit PP2A but acts by mediating phosphorylation and subsequent activation of ARPP19 and ENSA at 'Ser-62' and 'Ser-67', respectively. ARPP19 and ENSA are phosphatase inhibitors that specifically inhibit the PPP2R2D (PR55-delta) subunit of PP2A. Inactivation of PP2A during M phase is essential to keep cyclin-B1-CDK1 activity high. Following DNA damage, it is also involved in checkpoint recovery by being inhibited. This is Serine/threonine-protein kinase greatwall (MASTL) from Bos taurus (Bovine).